The following is a 171-amino-acid chain: Methylated-DNA--protein-cysteine methyltransferase (171 aa).

Residue C139 is the Nucleophile; methyl group acceptor of the active site.

Belongs to the MGMT family.

The protein localises to the cytoplasm. The catalysed reaction is a 6-O-methyl-2'-deoxyguanosine in DNA + L-cysteinyl-[protein] = S-methyl-L-cysteinyl-[protein] + a 2'-deoxyguanosine in DNA. It catalyses the reaction a 4-O-methyl-thymidine in DNA + L-cysteinyl-[protein] = a thymidine in DNA + S-methyl-L-cysteinyl-[protein]. In terms of biological role, involved in the cellular defense against the biological effects of O6-methylguanine (O6-MeG) and O4-methylthymine (O4-MeT) in DNA. Repairs the methylated nucleobase in DNA by stoichiometrically transferring the methyl group to a cysteine residue in the enzyme. This is a suicide reaction: the enzyme is irreversibly inactivated. The sequence is that of Methylated-DNA--protein-cysteine methyltransferase from Shigella flexneri.